The sequence spans 343 residues: Ferrochelatase (343 aa).

Residues histidine 211 and glutamate 292 each coordinate Fe cation.

The protein belongs to the ferrochelatase family.

The protein resides in the cytoplasm. It carries out the reaction heme b + 2 H(+) = protoporphyrin IX + Fe(2+). It participates in porphyrin-containing compound metabolism; protoheme biosynthesis; protoheme from protoporphyrin-IX: step 1/1. Its function is as follows. Catalyzes the ferrous insertion into protoporphyrin IX. This Gluconobacter oxydans (strain 621H) (Gluconobacter suboxydans) protein is Ferrochelatase.